The chain runs to 274 residues: Caldesmon, smooth muscle (274 aa).

Disordered regions lie at residues 1-102 and 179-274; these read SNLK…FSPK and KGNV…EKEP. 2 stretches are compositionally biased toward basic and acidic residues: residues 12–21 and 28–95; these read GSEKLKEKQQ and DELK…EKKP. The span at 182 to 194 shows a compositional bias: polar residues; it reads VFSSPGGTGTPNK. Composition is skewed to basic and acidic residues over residues 226-245 and 260-274; these read SDLRPGDVSGKRNLWEKQSV and KKSETDGLRQFEKEP.

Its subcellular location is the cytoplasm. The protein resides in the cytoskeleton. It localises to the myofibril. It is found in the stress fiber. Its function is as follows. Control of actomyosin interactions in smooth muscle and nonmuscle cells (could act as a bridge between myosin and actin filaments). Inhibits the actin-activated ATPase of myosin this inhibition is attenuated by calcium-calmodulin and is potentiated by tropomyosin. Interacts with actin, myosin, 2 molecules of tropomyosin and with calmodulin. In Meleagris gallopavo (Wild turkey), this protein is Caldesmon, smooth muscle (CALD1).